The primary structure comprises 93 residues: Pyrimidine/purine nucleoside phosphorylase (93 aa).

It belongs to the nucleoside phosphorylase PpnP family.

It carries out the reaction a purine D-ribonucleoside + phosphate = a purine nucleobase + alpha-D-ribose 1-phosphate. The catalysed reaction is adenosine + phosphate = alpha-D-ribose 1-phosphate + adenine. The enzyme catalyses cytidine + phosphate = cytosine + alpha-D-ribose 1-phosphate. It catalyses the reaction guanosine + phosphate = alpha-D-ribose 1-phosphate + guanine. It carries out the reaction inosine + phosphate = alpha-D-ribose 1-phosphate + hypoxanthine. The catalysed reaction is thymidine + phosphate = 2-deoxy-alpha-D-ribose 1-phosphate + thymine. The enzyme catalyses uridine + phosphate = alpha-D-ribose 1-phosphate + uracil. It catalyses the reaction xanthosine + phosphate = alpha-D-ribose 1-phosphate + xanthine. Catalyzes the phosphorolysis of diverse nucleosides, yielding D-ribose 1-phosphate and the respective free bases. Can use uridine, adenosine, guanosine, cytidine, thymidine, inosine and xanthosine as substrates. Also catalyzes the reverse reactions. This Marinobacter nauticus (strain ATCC 700491 / DSM 11845 / VT8) (Marinobacter aquaeolei) protein is Pyrimidine/purine nucleoside phosphorylase.